A 782-amino-acid polypeptide reads, in one-letter code: MQNFWFAIFFFLLTCAPPSPLSYASTVTLSRRLLYDYESPLPLPLSPISPPFFPLESSPPSPPPPLPPTPPTTFAVFPTFPANISALVLPRSSKPHHTSPTLLLPALSAVLVIATVIGLALFLYGRHRGQTRHLKNSHCSSSNTSSYGDEQSHITTNFNMAATTSPSEVFYLNTEESDHIRTGGTFFLKQDSPEIRPLPPLPPRSFHHNNYETEVNEEDEEEEEDVFFSPMASLPGSANSSPSHSCSSSCSGWVSPARSFSITMSPPNPRYSDATNLQSPSPERLRVRKNYNGNGSSSLRMFSFWNQNMGFGFPRISSASTSPDRGFIRTPLSSLYSSVSTSPDGLFRKFLDSSPPIWNDFSRNVKSVLLSHTASSRRDFVINIGESSSQQSKVPALPPPTRPPPLVPPSQPFVVQNDVKKQSFSDQPPKQLHWERLRSSSSKLSKEMVETMFIANSSNPRDLPIQNQVLDPRKAQNIATLLQLLNLSTKDVCQALLDGDCDVLGAELLECLSRLAPSKEEERKLKSFSDGSEIGPAERFLKELLHVPFVFKRVDALLFVANFHSEIKRLRKSFSVVQVACEELRNSRMFSILLEAILKTGNMMSVRTNRCGDADAFKLDTLLKLVDVKGLDGRSSLLHFVVQEMMKSEGSVRALEGIRNLNTELSNVKKSADIEYGVLRSNVSRICQGLKNIEALLLLSEESGSYGDQWLKFKERMTRFLKTAAEEIVKIKIRESSTLSALEEVTEQFHGDASKEGHTMRIFMIVRDFLSVLDQVCKEMGD.

The N-terminal stretch at 1–24 is a signal peptide; the sequence is MQNFWFAIFFFLLTCAPPSPLSYA. The helical transmembrane segment at 102–122 threads the bilayer; sequence LLLPALSAVLVIATVIGLALF. 3 disordered regions span residues 191-223, 264-287, and 387-407; these read DSPE…EEEE, MSPP…RLRV, and SSSQ…PPLV. The segment covering 214–223 has biased composition (acidic residues); sequence EVNEEDEEEE. Over residues 396 to 407 the composition is skewed to pro residues; it reads ALPPPTRPPPLV. The 377-residue stretch at 406 to 782 folds into the FH2 domain; that stretch reads LVPPSQPFVV…LDQVCKEMGD (377 aa).

This sequence belongs to the formin-like family. Class-I subfamily.

The protein resides in the membrane. In terms of biological role, might be involved in the organization and polarity of the actin cytoskeleton. The chain is Formin-like protein 9 (FH9) from Arabidopsis thaliana (Mouse-ear cress).